We begin with the raw amino-acid sequence, 352 residues long: tRNA N6-adenosine threonylcarbamoyltransferase (352 aa).

H117 and H121 together coordinate Fe cation. Substrate is bound by residues 140-144, D173, G186, and N287; that span reads LVSGG. D315 contributes to the Fe cation binding site.

This sequence belongs to the KAE1 / TsaD family. It depends on Fe(2+) as a cofactor.

It localises to the cytoplasm. It carries out the reaction L-threonylcarbamoyladenylate + adenosine(37) in tRNA = N(6)-L-threonylcarbamoyladenosine(37) in tRNA + AMP + H(+). Functionally, required for the formation of a threonylcarbamoyl group on adenosine at position 37 (t(6)A37) in tRNAs that read codons beginning with adenine. Is involved in the transfer of the threonylcarbamoyl moiety of threonylcarbamoyl-AMP (TC-AMP) to the N6 group of A37, together with TsaE and TsaB. TsaD likely plays a direct catalytic role in this reaction. This Psychrobacter cryohalolentis (strain ATCC BAA-1226 / DSM 17306 / VKM B-2378 / K5) protein is tRNA N6-adenosine threonylcarbamoyltransferase.